Here is a 360-residue protein sequence, read N- to C-terminus: MAKLPVEKMRELERRFGEIEARMSAGPAADVYVKLASEYSELEPVVKKIRDYEKAISEAADLEALLADKTTDKDMRDLAEMELPEVETRIRELEKDMQVLLLPKDAADEKSAILEIRAGTGGSEAALFAGDLFRMYERFAATKGWKVEVLSASEGEAGGYKEIIATITGRGVFSKLKFESGVHRVQRVPETEASGRIHTSAATVAVLPEAEDIDVEIRPEDIRIDTMRASGAGGQHVNTTDSAVRITHLPTGLIVTSSEKSQHQNRAKAMQVLRSRLYDIERQKVDSERSADRKSQVGSGDRSERIRTYNFPQGRVTDHRINLTLYKLDRVIEGEIDELVDALIADYQAGQLAQLGEQQL.

Gln-235 is subject to N5-methylglutamine. Positions Lys-284–Glu-304 are disordered.

It belongs to the prokaryotic/mitochondrial release factor family. In terms of processing, methylated by PrmC. Methylation increases the termination efficiency of RF1.

The protein resides in the cytoplasm. Its function is as follows. Peptide chain release factor 1 directs the termination of translation in response to the peptide chain termination codons UAG and UAA. The polypeptide is Peptide chain release factor 1 (Agrobacterium fabrum (strain C58 / ATCC 33970) (Agrobacterium tumefaciens (strain C58))).